We begin with the raw amino-acid sequence, 457 residues long: NAC domain-containing protein 69 (457 aa).

The NAC domain occupies 4-153; the sequence is DLVGYRFYPT…NYVICQVMYK (150 aa). A DNA-binding region spans residues 107 to 159; it reads IGIKKTLVYYEGRVPKGVWTPWVMHEYHITCLPQDQRNYVICQVMYKGEDGDV. Disordered stretches follow at residues 158 to 180 and 302 to 332; these read DVPS…SNTV and DSNS…SNRQ. Polar residues predominate over residues 162-180; sequence GGNNSSEPSQSLVSDSNTV. Residues 302-311 are compositionally biased toward low complexity; the sequence is DSNSDAESIS. The segment covering 312-332 has biased composition (polar residues); that stretch reads ATSYQGTSSPGDDSVGSSNRQ. The chain crosses the membrane as a helical span at residues 421-441; that stretch reads IYLMRMIIGFILLLALISNII.

The protein localises to the membrane. Its subcellular location is the nucleus. In terms of biological role, transcription activator activated by proteolytic cleavage through regulated intramembrane proteolysis (RIP). Involved in salt stress response during seed germination and seedling growth. Binds the auxin-responsive IAA30 gene promoter and may serve as a molecular link that interconnects a developmental feedback loop of auxin signaling with a salt signal transduction pathway during seed germination. This is NAC domain-containing protein 69 (NAC69) from Arabidopsis thaliana (Mouse-ear cress).